A 347-amino-acid chain; its full sequence is MAMDAQKQKALDMAIKQIDKTFGKGTLMRLGDKEFEPIAAISTGSLGLDMALGIGGIPQGRIVEVYGPESSGKTTLALQTIASAQKEGMVCAFIDAEHALDVVYAKNLGVDTDNLLVSQPDFGEQALDVLETLTRSGAVDLIIVDSVAALTPKSEIEGDMGDTHVGLQARLMSQALRKLTAILHKTNTTVIFINQIRMKIGTMGYGSPETTTGGNALKFYCSVRIDVRRIATLKQGESQIGNRVKAKVVKNKVAPPFRQAEFDIMFGEGISYIGELIDYGIKMDIVDKSGAWFSYGAEKLGQGKENAKLTLKENPKLREEIEMQVKEALGFGEALGMDQEEISSADQ.

Residue 67–74 participates in ATP binding; it reads GPESSGKT.

Belongs to the RecA family.

It is found in the cytoplasm. Its function is as follows. Can catalyze the hydrolysis of ATP in the presence of single-stranded DNA, the ATP-dependent uptake of single-stranded DNA by duplex DNA, and the ATP-dependent hybridization of homologous single-stranded DNAs. It interacts with LexA causing its activation and leading to its autocatalytic cleavage. In Sulfurovum sp. (strain NBC37-1), this protein is Protein RecA.